A 318-amino-acid chain; its full sequence is Pantothenate kinase (318 aa).

96–103 (GSVAVGKS) is an ATP binding site.

The protein belongs to the prokaryotic pantothenate kinase family.

The protein localises to the cytoplasm. It carries out the reaction (R)-pantothenate + ATP = (R)-4'-phosphopantothenate + ADP + H(+). Its pathway is cofactor biosynthesis; coenzyme A biosynthesis; CoA from (R)-pantothenate: step 1/5. The sequence is that of Pantothenate kinase from Afipia carboxidovorans (strain ATCC 49405 / DSM 1227 / KCTC 32145 / OM5) (Oligotropha carboxidovorans).